The sequence spans 433 residues: MLSYKKVLIVGRPNVGKSALFNRILDAKRSITESTYGVTRDLVEEVCKVGSFNFKLIDTGGFTILKDEISKIVVQKVLSSLEKVDLILLVLDVNEILLEDYEIIERLRKYSSKVILVLNKVDTKDKEFLAHKFHNLGFKRYFLVSALHRRGITKLRDFLKVEVGRVNIEEEVNIKVGIIGKPNSGKSTLINYLSGNEISIVSDQPGTTRDFIKTKLTRNGKVFEIIDTAGIRRRARVNEVVEYYSVNRALKVIDIVDIVFLLIDVEEELTSQDKKIAHYVTKKGKGIIIVFSKWDLLEESKGYFETLKGRVKFFFPVLNFAPIFRISVYKKIGLDSLFKEALKVKDQLELKTNTPDLNKMLNLWIKDYHLNISHKIKYITQVSTNPVKFILFANKIKNFPNSYYNYLVNNLRKIGYKNIPILVELREKIRDLK.

EngA-type G domains lie at Lys-5–Asn-167 and Ile-174–Glu-349. GTP-binding positions include Gly-11–Ser-18, Asp-58–Phe-62, Asn-119–Asp-122, Gly-180–Ser-187, Asp-227–Ile-231, and Ser-292–Asp-295. Residues Glu-349–Ile-429 form the KH-like domain.

It belongs to the TRAFAC class TrmE-Era-EngA-EngB-Septin-like GTPase superfamily. EngA (Der) GTPase family. As to quaternary structure, associates with the 50S ribosomal subunit.

Functionally, GTPase that plays an essential role in the late steps of ribosome biogenesis. The sequence is that of GTPase Der from Borrelia garinii subsp. bavariensis (strain ATCC BAA-2496 / DSM 23469 / PBi) (Borreliella bavariensis).